The chain runs to 350 residues: Flap endonuclease 1 (350 aa).

The N-domain stretch occupies residues 1–102 (MGVTALRELI…REIERRQKLK (102 aa)). Mg(2+) is bound by residues aspartate 31, aspartate 84, glutamate 156, glutamate 158, aspartate 177, aspartate 179, and aspartate 240. The interval 120 to 261 (EARKYAQMSA…TALRYVKSYG (142 aa)) is I-domain. Positions 339 to 347 (KQSTLDMFF) are interaction with PCNA.

It belongs to the XPG/RAD2 endonuclease family. FEN1 subfamily. As to quaternary structure, interacts with PCNA. PCNA stimulates the nuclease activity without altering cleavage specificity. Mg(2+) is required as a cofactor.

Structure-specific nuclease with 5'-flap endonuclease and 5'-3' exonuclease activities involved in DNA replication and repair. During DNA replication, cleaves the 5'-overhanging flap structure that is generated by displacement synthesis when DNA polymerase encounters the 5'-end of a downstream Okazaki fragment. Binds the unpaired 3'-DNA end and kinks the DNA to facilitate 5' cleavage specificity. Cleaves one nucleotide into the double-stranded DNA from the junction in flap DNA, leaving a nick for ligation. Also involved in the base excision repair (BER) pathway. Acts as a genome stabilization factor that prevents flaps from equilibrating into structures that lead to duplications and deletions. Also possesses 5'-3' exonuclease activity on nicked or gapped double-stranded DNA. In Ignicoccus hospitalis (strain KIN4/I / DSM 18386 / JCM 14125), this protein is Flap endonuclease 1.